The following is a 466-amino-acid chain: Soluble pyridine nucleotide transhydrogenase (466 aa).

36–45 (ERYQNVGGGC) serves as a coordination point for FAD.

It belongs to the class-I pyridine nucleotide-disulfide oxidoreductase family. FAD serves as cofactor.

The protein localises to the cytoplasm. It catalyses the reaction NAD(+) + NADPH = NADH + NADP(+). Its function is as follows. Conversion of NADPH, generated by peripheral catabolic pathways, to NADH, which can enter the respiratory chain for energy generation. The chain is Soluble pyridine nucleotide transhydrogenase from Escherichia coli O81 (strain ED1a).